The following is a 58-amino-acid chain: Small ribosomal subunit protein bS21 (58 aa).

A disordered region spans residues 25-58 (SKSGTLQEYRKREHYEKPSVKRKKKSEAARKRKF). Over residues 32-43 (EYRKREHYEKPS) the composition is skewed to basic and acidic residues. A compositionally biased stretch (basic residues) spans 44-58 (VKRKKKSEAARKRKF).

It belongs to the bacterial ribosomal protein bS21 family.

The protein is Small ribosomal subunit protein bS21 of Oceanobacillus iheyensis (strain DSM 14371 / CIP 107618 / JCM 11309 / KCTC 3954 / HTE831).